Reading from the N-terminus, the 420-residue chain is Protein phosphatase methylesterase 1 (420 aa).

Composition is skewed to low complexity over residues 18–28 (PEAPLLSESSS) and 42–51 (SSVSSTGTVI). The segment at 18 to 51 (PEAPLLSESSSMNHPAESSHDEDSSSVSSTGTVI) is disordered. Active-site residues include Ser197, Asp223, and His354.

Belongs to the AB hydrolase superfamily.

The enzyme catalyses [phosphatase 2A protein]-C-terminal L-leucine methyl ester + H2O = [phosphatase 2A protein]-C-terminal L-leucine + methanol + H(+). Its function is as follows. Demethylates proteins that have been reversibly carboxymethylated. Demethylates the phosphatase PP2A catalytic subunit. The chain is Protein phosphatase methylesterase 1 (ppe1) from Aspergillus fumigatus (strain ATCC MYA-4609 / CBS 101355 / FGSC A1100 / Af293) (Neosartorya fumigata).